The primary structure comprises 137 residues: Large-conductance mechanosensitive channel (137 aa).

The next 3 helical transmembrane spans lie at 15 to 35, 38 to 58, and 80 to 100; these read VDLA…NSIV, IIMP…MFIQ, and GNFV…FLVV.

Belongs to the MscL family. In terms of assembly, homopentamer.

It is found in the cell inner membrane. In terms of biological role, channel that opens in response to stretch forces in the membrane lipid bilayer. May participate in the regulation of osmotic pressure changes within the cell. The sequence is that of Large-conductance mechanosensitive channel from Brucella anthropi (strain ATCC 49188 / DSM 6882 / CCUG 24695 / JCM 21032 / LMG 3331 / NBRC 15819 / NCTC 12168 / Alc 37) (Ochrobactrum anthropi).